Consider the following 365-residue polypeptide: 3-galactosyl-N-acetylglucosaminide 4-alpha-L-fucosyltransferase FUT3 (365 aa).

Residues methionine 1–histidine 15 lie on the Cytoplasmic side of the membrane. A helical; Signal-anchor for type II membrane protein membrane pass occupies residues cysteine 16 to leucine 34. The Lumenal segment spans residues arginine 35–glutamine 365. Asparagine 100, asparagine 158, and asparagine 189 each carry an N-linked (GlcNAc...) asparagine glycan.

The protein belongs to the glycosyltransferase 10 family. Glycosylated. In terms of tissue distribution, liver, kidney, lung and brain.

Its subcellular location is the golgi apparatus. It localises to the golgi stack membrane. The enzyme catalyses a beta-D-galactosyl-(1-&gt;3)-N-acetyl-beta-D-glucosaminyl derivative + GDP-beta-L-fucose = a beta-D-galactosyl-(1-&gt;3)-[alpha-L-fucosyl-(1-&gt;4)]-N-acetyl-beta-D-glucosaminyl derivative + GDP + H(+). It carries out the reaction an N-acetyl-alpha-neuraminyl-(2-&gt;3)-beta-D-galactosyl-(1-&gt;4)-N-acetyl-beta-D-glucosaminyl derivative + GDP-beta-L-fucose = an alpha-Neu5Ac-(2-&gt;3)-beta-D-Gal-(1-&gt;4)-[alpha-L-Fuc-(1-&gt;3)]-beta-D-GlcNAc derivative + GDP + H(+). The catalysed reaction is a beta-D-galactosyl-(1-&gt;4)-N-acetyl-beta-D-glucosaminyl derivative + GDP-beta-L-fucose = a beta-D-galactosyl-(1-&gt;4)-[alpha-L-fucosyl-(1-&gt;3)]-N-acetyl-beta-D-glucosaminyl derivative + GDP + H(+). It catalyses the reaction an alpha-Neu5Ac-(2-&gt;3)-beta-D-Gal-(1-&gt;4)-beta-D-GlcNAc-(1-&gt;3)-beta-D-Gal-(1-&gt;4)-[alpha-L-Fuc-(1-&gt;3)]-beta-D-GlcNAc derivative + GDP-beta-L-fucose = an alpha-Neu5Ac-(2-&gt;3)-beta-D-Gal-(1-&gt;4)-[alpha-L-Fuc-(1-&gt;3)]-beta-D-GlcNAc-(1-&gt;3)-beta-D-Gal-(1-&gt;4)-[alpha-L-Fuc-(1-&gt;3)]-beta-D-GlcNAc derivative + GDP + H(+). The enzyme catalyses Lc4Cer + GDP-beta-L-fucose = a lactoside III(4)-a-Fuc-Lc4Cer + GDP + H(+). It carries out the reaction a beta-D-Gal-(1-&gt;3)-beta-D-GlcNAc-(1-&gt;3)-beta-D-Gal-(1-&gt;4)-beta-D-Glc-(1&lt;-&gt;1')-Cer(d18:1(4E)) + GDP-beta-L-fucose = a III(4)-a-Fuc-Lc4Cer(d18:1(4E)) + GDP + H(+). The catalysed reaction is N-acetyl-alpha-neuraminosyl-(2-&gt;3)-beta-D-galactosyl-(1-&gt;3)-[N-acetyl-alpha-neuraminosyl-(2-&gt;6)]-N-acetyl-beta-D-glucosaminyl-(1-&gt;3)-beta-D-galactosyl-(1-&gt;4)-beta-D-glucosyl-(1&lt;-&gt;1')-N-acyl-sphing-4-enine + GDP-beta-L-fucose = N-acetyl-alpha-neuraminosyl-(2-&gt;3)-beta-D-galactosyl-(1-&gt;3)-alpha-L-fucosyl-(1-&gt;4)-[N-acetyl-alpha-neuraminosyl-(2-&gt;6)-N-acetyl-beta-D-glucosaminyl-(1-&gt;3)]-beta-D-galactosyl-(1-&gt;4)-beta-D-glucosyl-(1&lt;-&gt;1')-N-acyl-sphing-4-enine + GDP + H(+). It catalyses the reaction N-acetyl-alpha-neuraminosyl-(2-&gt;3)-beta-D-galactosyl-(1-&gt;3)-N-acetyl-beta-D-glucosaminyl-(1-&gt;3)-beta-D-galactosyl-(1-&gt;4)-beta-D-glucosyl-(1&lt;-&gt;1')-N-acyl-sphing-4-enine + GDP-beta-L-fucose = N-acetyl-alpha-neuraminosyl-(2-&gt;3)-beta-D-galactosyl-(1-&gt;3)-alpha-L-fucosyl-(1-&gt;4)-[N-acetyl-beta-D-glucosaminyl-(1-&gt;3)]-beta-D-galactosyl-(1-&gt;4)-beta-D-glucosyl-(1&lt;-&gt;1')-N-acyl-sphing-4-enine + GDP + H(+). The enzyme catalyses beta-D-galactosyl-(1-&gt;3)-N-acetyl-D-glucosamine + GDP-beta-L-fucose = beta-D-galactosyl-(1-&gt;3)-[alpha-L-fucosyl-(1-&gt;4)]-N-acetyl-D-glucosamine + GDP + H(+). It carries out the reaction alpha-L-Fuc-(1-&gt;2)-beta-D-Gal-(1-&gt;3)-D-GlcNAc + GDP-beta-L-fucose = alpha-L-Fuc-(1-&gt;2)-beta-D-Gal-(1-&gt;3)-[alpha-L-Fuc-(1-&gt;4)]-D-GlcNAc + GDP + H(+). The catalysed reaction is alpha-L-Fuc-(1-&gt;2)-beta-D-Gal-(1-&gt;4)-D-GlcNAc + GDP-beta-L-fucose = alpha-L-Fuc-(1-&gt;2)-beta-D-Gal-(1-&gt;4)-[alpha-L-Fuc-(1-&gt;3)]-D-GlcNAc + GDP + H(+). It catalyses the reaction beta-D-galactosyl-(1-&gt;4)-N-acetyl-D-glucosamine + GDP-beta-L-fucose = beta-D-galactosyl-(1-&gt;4)-[alpha-L-fucosyl-(1-&gt;3)]-N-acetyl-D-glucosamine + GDP + H(+). The enzyme catalyses lactose + GDP-beta-L-fucose = beta-D-galactosyl-(1-&gt;4)-[alpha-L-fucosyl-(1-&gt;3)]-D-glucose + GDP + H(+). It carries out the reaction an alpha-Neu5Ac-(2-&gt;3)-beta-D-Gal-(1-&gt;3)-D-GlcNAc derivative + GDP-beta-L-fucose = an alpha-Neu5Ac-(2-&gt;3)-beta-D-Gal-(1-&gt;3)-[alpha-L-Fuc-(1-&gt;4)]-beta-D-GlcNAc derivative + GDP + H(+). It participates in protein modification; protein glycosylation. In terms of biological role, catalyzes the transfer of L-fucose, from a guanosine diphosphate-beta-L-fucose, to both the subterminal N-acetyl glucosamine (GlcNAc) of type 1 chain (beta-D-Gal-(1-&gt;3)-beta-D-GlcNAc) glycolipids and oligosaccharides via an alpha(1,4) linkage, and the subterminal glucose (Glc) or GlcNAc of type 2 chain (beta-D-Gal-(1-&gt;4)-beta-D-GlcNAc) oligosaccharides via an alpha(1,3) linkage, independently of the presence of terminal alpha-L-fucosyl-(1,2) moieties on the terminal galactose of these acceptors and participates in the blood groups Lewis determination and expression of Lewis a (Le(a)), lewis b (Le(b)), Lewis x/SSEA-1 (Le(x)) and lewis y (Le(y)) antigens. Also catalyzes the transfer of L-fucose to subterminal GlcNAc of sialyl- and disialyl-lactotetraosylceramide to produce sialyl Lewis a (sLe(a)) and disialyl Lewis a via an alpha(1,4) linkage and therefore may regulate cell surface sialyl Lewis a expression and consequently regulates adhesive properties to E-selectin, cell proliferation and migration. Catalyzes the transfer of an L-fucose to 3'-sialyl-N-acetyllactosamine by an alpha(1,3) linkage, which allows the formation of sialyl-Lewis x structure and therefore may regulate the sialyl-Lewis x surface antigen expression and consequently adhesive properties to E-selectin. Prefers type 1 chain over type 2 acceptors. Type 1 tetrasaccharide is a better acceptor than type 1 disaccharide suggesting that a beta anomeric configuration of GlcNAc in the substrate is preferred. Lewis-positive (Le(+)) individuals have an active enzyme while Lewis-negative (Le(-)) individuals have an inactive enzyme. The chain is 3-galactosyl-N-acetylglucosaminide 4-alpha-L-fucosyltransferase FUT3 from Bos taurus (Bovine).